Here is a 279-residue protein sequence, read N- to C-terminus: MNNIKVFVLMAGLTGLVVAIGQALGGGQGAILALLLSAGMNLFMYWGSSSMVLRSYGAQVVTAQDAPELYEMVDRLRQRAGLPMPTVAIAPQDQPNAFATGRNPENSVVCVTQGIMRALSKDELEGVIAHELAHIKNRDMLLQTIAATMAGAVSNLAQFAFFFGGRSDDDDGVHPVAGIAMLIIGPIVAMVIQFAISRQREFKADAVGAEISGRPLSLANALLKLESGARRIPMQVSPSAATLAIVNPLAAFSMRGISKWMSTHPPTAERVAALQALAA.

The next 2 helical transmembrane spans lie at Val6–Gly26 and Gly29–Ser49. Residue His130 coordinates Zn(2+). The active site involves Glu131. His134 contributes to the Zn(2+) binding site. A run of 2 helical transmembrane segments spans residues Ile145 to Gly165 and Val176 to Ile196. Glu201 lines the Zn(2+) pocket.

Belongs to the peptidase M48B family. Zn(2+) is required as a cofactor.

The protein localises to the cell inner membrane. The protein is Protease HtpX homolog of Gemmatimonas aurantiaca (strain DSM 14586 / JCM 11422 / NBRC 100505 / T-27).